We begin with the raw amino-acid sequence, 60 residues long: Large ribosomal subunit protein bL33 (60 aa).

Belongs to the bacterial ribosomal protein bL33 family.

The polypeptide is Large ribosomal subunit protein bL33 (Cytophaga hutchinsonii (strain ATCC 33406 / DSM 1761 / CIP 103989 / NBRC 15051 / NCIMB 9469 / D465)).